Consider the following 604-residue polypeptide: Elongation factor 4 (604 aa).

One can recognise a tr-type G domain in the interval 7 to 189; the sequence is SKIRNFCIIA…SIVHLVPPPS (183 aa). GTP contacts are provided by residues 19–24 and 136–139; these read DHGKST and NKID.

This sequence belongs to the TRAFAC class translation factor GTPase superfamily. Classic translation factor GTPase family. LepA subfamily.

Its subcellular location is the cell inner membrane. The enzyme catalyses GTP + H2O = GDP + phosphate + H(+). Required for accurate and efficient protein synthesis under certain stress conditions. May act as a fidelity factor of the translation reaction, by catalyzing a one-codon backward translocation of tRNAs on improperly translocated ribosomes. Back-translocation proceeds from a post-translocation (POST) complex to a pre-translocation (PRE) complex, thus giving elongation factor G a second chance to translocate the tRNAs correctly. Binds to ribosomes in a GTP-dependent manner. The sequence is that of Elongation factor 4 from Synechococcus sp. (strain ATCC 27144 / PCC 6301 / SAUG 1402/1) (Anacystis nidulans).